We begin with the raw amino-acid sequence, 413 residues long: Serine hydroxymethyltransferase (413 aa).

(6S)-5,6,7,8-tetrahydrofolate contacts are provided by residues Leu-119 and 123 to 125 (GHL). The residue at position 228 (Lys-228) is an N6-(pyridoxal phosphate)lysine. 351–353 (SPF) contacts (6S)-5,6,7,8-tetrahydrofolate.

This sequence belongs to the SHMT family. As to quaternary structure, homodimer. The cofactor is pyridoxal 5'-phosphate.

The protein resides in the cytoplasm. The enzyme catalyses (6R)-5,10-methylene-5,6,7,8-tetrahydrofolate + glycine + H2O = (6S)-5,6,7,8-tetrahydrofolate + L-serine. It functions in the pathway one-carbon metabolism; tetrahydrofolate interconversion. It participates in amino-acid biosynthesis; glycine biosynthesis; glycine from L-serine: step 1/1. Its function is as follows. Catalyzes the reversible interconversion of serine and glycine with tetrahydrofolate (THF) serving as the one-carbon carrier. This reaction serves as the major source of one-carbon groups required for the biosynthesis of purines, thymidylate, methionine, and other important biomolecules. Also exhibits THF-independent aldolase activity toward beta-hydroxyamino acids, producing glycine and aldehydes, via a retro-aldol mechanism. This chain is Serine hydroxymethyltransferase, found in Clostridium botulinum (strain Okra / Type B1).